A 314-amino-acid polypeptide reads, in one-letter code: Nodulation protein D 2 (314 aa).

Residues 6-63 (LDLNLLVVLDALMTERNLTAAARSINLSQPAMSAAVARLRTNFRDDLFAMAGREFIPT) enclose the HTH lysR-type domain. Residues 23–42 (LTAAARSINLSQPAMSAAVA) constitute a DNA-binding region (H-T-H motif).

The protein belongs to the LysR transcriptional regulatory family.

Its function is as follows. NodD regulates the expression of the nodABCFE genes which encode other nodulation proteins. NodD is also a negative regulator of its own expression. Binds flavonoids as inducers. The protein is Nodulation protein D 2 (nodD2) of Rhizobium tropici.